A 646-amino-acid polypeptide reads, in one-letter code: Lipoteichoic acid synthase (646 aa).

Topologically, residues 1–7 are cytoplasmic; it reads MSSQKKK. Residues 8–28 traverse the membrane as a helical segment; sequence ISLFAFFLLTVITITLKTYFS. Over 29-43 the chain is Extracellular; it reads YYVDFSLGVKGLVQN. Residues 44 to 64 traverse the membrane as a helical segment; the sequence is LILLMNPYSLVALVLSVFLFF. At 65-68 the chain is on the cytoplasmic side; it reads KGKK. A helical transmembrane segment spans residues 69–89; the sequence is AFWFMFIGGFLLTFLLYANVV. Over 90–119 the chain is Extracellular; the sequence is YFRFFSDFLTFSTLNQVGNVESMGGAVSAS. Residues 120–140 traverse the membrane as a helical segment; that stretch reads FKWYDFVYFIDTLVYLFILIF. Residues 141 to 153 are Cytoplasmic-facing; sequence KTKWLDTKAFSKK. Residues 154–174 form a helical membrane-spanning segment; the sequence is FVPVVMAASVALFFLNLAFAE. Residues 175–646 are Extracellular-facing; sequence TDRPELLTRT…ETGPKANSKK (472 aa). Mn(2+) contacts are provided by Glu-255 and Thr-300. Thr-300 is an active-site residue. His-416 provides a ligand contact to substrate. The Mn(2+) site is built by Asp-475 and His-476. Positions 623–638 are enriched in basic and acidic residues; sequence NPDFKKVNPSKYKYET. The disordered stretch occupies residues 623 to 646; that stretch reads NPDFKKVNPSKYKYETGPKANSKK.

This sequence belongs to the LTA synthase family. In terms of processing, proteolytically cleaved.

The protein resides in the cell membrane. It localises to the secreted. The protein operates within cell wall biogenesis; lipoteichoic acid biosynthesis. Catalyzes the polymerization of lipoteichoic acid (LTA) polyglycerol phosphate, a reaction that presumably uses phosphatidylglycerol (PG) as substrate. Is required for staphylococcal growth and cell division process. This Staphylococcus aureus (strain bovine RF122 / ET3-1) protein is Lipoteichoic acid synthase (ltaS).